A 358-amino-acid polypeptide reads, in one-letter code: Trace amine-associated receptor 7a (358 aa).

Residues 1–47 (MDKLVDHFLSDQSRTMNEDLFSATSTELCYENLNRSCVRSPYSPGPR) are Extracellular-facing. N-linked (GlcNAc...) asparagine glycosylation is present at asparagine 34. Intrachain disulfides connect cysteine 37–cysteine 201 and cysteine 120–cysteine 205. A helical membrane pass occupies residues 48 to 68 (LILYAVFGFGAALAVCGNLLV). The Cytoplasmic portion of the chain corresponds to 69-83 (MTSILHFRQLHSPAN). Residues 84 to 104 (FLVASLACADFLVGLTVMPFS) form a helical membrane-spanning segment. At 105–121 (TVRSVEGCWYFGESYCK) the chain is on the extracellular side. A helical transmembrane segment spans residues 122–143 (FHSCFEGSFCYSSIFHLCFISV). The Cytoplasmic portion of the chain corresponds to 144–166 (DRYIAVSDPLTYPTRFTASVSGK). A helical transmembrane segment spans residues 167 to 187 (CITFSWLLSIIYSFSLLYTGA). Topologically, residues 188–212 (NEAGLEDLVSVLTCVGGCQIAVNQS) are extracellular. N-linked (GlcNAc...) asparagine glycosylation is present at asparagine 210. A helical transmembrane segment spans residues 213-233 (WVFINFLLFLIPTLVMMTVYS). Topologically, residues 234–274 (KIFLIAKQQAQNIEKMSKQTARASESYKDRVAKRERKAAKT) are cytoplasmic. The helical transmembrane segment at 275–295 (LGIAVAAFLLSWLPYFIDSII) threads the bilayer. At 296 to 309 (DAFLGFITPTYVYE) the chain is on the extracellular side. Residues 310–333 (ILVWIAYYNSAMNPLIYAFFYPWF) traverse the membrane as a helical segment. Topologically, residues 334-358 (RKAIKLIVTGKILRENSSTTNLFPE) are cytoplasmic.

Belongs to the G-protein coupled receptor 1 family. In terms of tissue distribution, specifically expressed in neurons of the olfactory epithelium.

The protein resides in the cell membrane. Its function is as follows. Olfactory receptor specific for N,N-dimethylalkylamines trace amines. Trace amine compounds are enriched in animal body fluids and act on trace amine-associated receptors (TAARs) to elicit both intraspecific and interspecific innate behaviors. Ligand-binding causes a conformation change that triggers signaling via G(s)-class of G alpha proteins (GNAL or GNAS). In Mus musculus (Mouse), this protein is Trace amine-associated receptor 7a.